Reading from the N-terminus, the 78-residue chain is Protein SlyX homolog (78 aa).

Belongs to the SlyX family.

The chain is Protein SlyX homolog from Xanthomonas euvesicatoria pv. vesicatoria (strain 85-10) (Xanthomonas campestris pv. vesicatoria).